A 151-amino-acid polypeptide reads, in one-letter code: Acidic phospholipase A2 4 (151 aa).

Residues 1–27 form the signal peptide; the sequence is MYPAHLLVLLAVCVSLLGAASIPARPL. 7 disulfide bridges follow: Cys38/Cys104, Cys54/Cys151, Cys56/Cys72, Cys71/Cys132, Cys78/Cys125, Cys88/Cys118, and Cys111/Cys123. Ca(2+) is bound by residues Tyr55, Gly57, and Gly59. His75 is an active-site residue. Position 76 (Asp76) interacts with Ca(2+). Residue Asp126 is part of the active site.

This sequence belongs to the phospholipase A2 family. Group I subfamily. D49 sub-subfamily. The cofactor is Ca(2+). In terms of tissue distribution, expressed by the venom gland.

It is found in the secreted. The catalysed reaction is a 1,2-diacyl-sn-glycero-3-phosphocholine + H2O = a 1-acyl-sn-glycero-3-phosphocholine + a fatty acid + H(+). Functionally, PLA2 catalyzes the calcium-dependent hydrolysis of the 2-acyl groups in 3-sn-phosphoglycerides. This Tropidechis carinatus (Australian rough-scaled snake) protein is Acidic phospholipase A2 4.